We begin with the raw amino-acid sequence, 96 residues long: Small ribosomal subunit protein bS6 (96 aa).

It belongs to the bacterial ribosomal protein bS6 family.

Its function is as follows. Binds together with bS18 to 16S ribosomal RNA. The sequence is that of Small ribosomal subunit protein bS6 from Carboxydothermus hydrogenoformans (strain ATCC BAA-161 / DSM 6008 / Z-2901).